The sequence spans 61 residues: Beta-defensin 13 (61 aa).

The signal sequence occupies residues 1-21 (MRLLYLLFAAVMLLFLQAVPA). Residues Ser24, Arg40, His44, Asn51, Asn53, Gly54, His58, and Lys61 each contribute to the a 1,2-diacyl-sn-glycero-3-phosphate site. 3 disulfide bridges follow: Cys31–Cys59, Cys38–Cys52, and Cys42–Cys60.

The protein belongs to the beta-defensin family. In terms of assembly, monomeric. Forms multimeric, probably including tetrameric, complexes in the presence of phospholipid phosphatidic acid.

It is found in the secreted. Exhibits antimicrobial activity against fungi. Antimicrobial activity in a pH-dependent manner against the yeast C.albicans; activity is salt tolerant and retains antifungal activity in NaCl concentrations of 100mM. Permeabilizes C.albicans cell membranes via targeting plasma membrane phospholipid phosphatidic acid. This chain is Beta-defensin 13, found in Crocodylus porosus (Saltwater crocodile).